The primary structure comprises 202 residues: T-cell surface glycoprotein CD3 epsilon chain (202 aa).

Residues 1–21 (MPSGSLWRVLGLCLLSVGAWG) form the signal peptide. Residues 22 to 125 (QEDNEDPLEP…NCVEVDTMTA (104 aa)) are Extracellular-facing. Residues 33–107 (PQTSASARYK…TSNSLEKNYL (75 aa)) enclose the Ig-like domain. Residues C54 and C96 are joined by a disulfide bond. The chain crosses the membrane as a helical span at residues 126-146 (VAIVVADVCITLGFLLLVYYW). At 147–202 (SKNKKASSVTMMRGPGAGGRPRGQNKEKPPPVPNPDYEPIRKGQQDLYSGLNQRGI) the chain is on the cytoplasmic side. Residues 156–202 (TMMRGPGAGGRPRGQNKEKPPPVPNPDYEPIRKGQQDLYSGLNQRGI) form a disordered region. Residues 170–187 (QNKEKPPPVPNPDYEPIR) are NUMB-binding region. One can recognise an ITAM domain in the interval 173 to 200 (EKPPPVPNPDYEPIRKGQQDLYSGLNQR). Residues 174 to 181 (KPPPVPNP) form a proline-rich sequence region. A phosphotyrosine mark is found at Y183 and Y194. The span at 192 to 202 (DLYSGLNQRGI) shows a compositional bias: polar residues.

The TCR-CD3 complex is composed of a CD3D/CD3E and a CD3G/CD3E heterodimers that preferentially associate with TCRalpha and TCRbeta, respectively, to form TCRalpha/CD3E/CD3G and TCRbeta/CD3G/CD3E trimers. In turn, the hexamer interacts with CD3Z homodimer to form the TCR-CD3 complex. Alternatively, TCRalpha and TCRbeta can be replaced by TCRgamma and TCRdelta. Interacts with CD6. Interacts (via Proline-rich sequence) with NCK1; the interaction is ligand dependent but independent of tyrosine kinase activation. In terms of processing, phosphorylated on Tyr residues after T-cell receptor triggering by LCK in association with CD4/CD8.

It localises to the cell membrane. Its function is as follows. Part of the TCR-CD3 complex present on T-lymphocyte cell surface that plays an essential role in adaptive immune response. When antigen presenting cells (APCs) activate T-cell receptor (TCR), TCR-mediated signals are transmitted across the cell membrane by the CD3 chains CD3D, CD3E, CD3G and CD3Z. All CD3 chains contain immunoreceptor tyrosine-based activation motifs (ITAMs) in their cytoplasmic domain. Upon TCR engagement, these motifs become phosphorylated by Src family protein tyrosine kinases LCK and FYN, resulting in the activation of downstream signaling pathways. In addition of this role of signal transduction in T-cell activation, CD3E plays an essential role in correct T-cell development. Also participates in internalization and cell surface down-regulation of TCR-CD3 complexes via endocytosis sequences present in CD3E cytosolic region. In addition to its role as a TCR coreceptor, it serves as a receptor for ITPRIPL1. Ligand recognition inhibits T-cell activation by promoting interaction with NCK1, which prevents CD3E-ZAP70 interaction and blocks the ERK-NFkB signaling cascade and calcium influx. The polypeptide is T-cell surface glycoprotein CD3 epsilon chain (CD3E) (Felis catus (Cat)).